The following is a 154-amino-acid chain: Anaerobic ribonucleoside-triphosphate reductase-activating protein (154 aa).

[4Fe-4S] cluster is bound by residues cysteine 26, cysteine 30, and cysteine 33. Residues 32 to 34 (GCY) and glycine 74 contribute to the S-adenosyl-L-methionine site.

The protein belongs to the organic radical-activating enzymes family. Forms a tetramer composed of two NrdD and two NrdG subunits. [4Fe-4S] cluster is required as a cofactor.

The protein resides in the cytoplasm. It catalyses the reaction glycyl-[protein] + reduced [flavodoxin] + S-adenosyl-L-methionine = glycin-2-yl radical-[protein] + semiquinone [flavodoxin] + 5'-deoxyadenosine + L-methionine + H(+). In terms of biological role, activation of anaerobic ribonucleoside-triphosphate reductase under anaerobic conditions by generation of an organic free radical, using S-adenosylmethionine and reduced flavodoxin as cosubstrates to produce 5'-deoxy-adenosine. This Escherichia coli O157:H7 protein is Anaerobic ribonucleoside-triphosphate reductase-activating protein (nrdG).